The sequence spans 435 residues: Zinc metalloproteinase/disintegrin (435 aa).

Residues 1–26 (KMCGVTQNWESYESTKKASQLNLTPE) constitute a propeptide that is removed on maturation. Gln-27 carries the pyrrolidone carboxylic acid modification. The 195-residue stretch at 33 to 227 (RYIKLGIFVD…HNFQCILNAP (195 aa)) folds into the Peptidase M12B domain. N-linked (GlcNAc...) asparagine glycosylation occurs at Asn-115. Disulfide bonds link Cys-144–Cys-222, Cys-184–Cys-206, and Cys-186–Cys-189. His-169 provides a ligand contact to Zn(2+). Residue Glu-170 is part of the active site. 2 residues coordinate Zn(2+): His-173 and His-179. Positions 228 to 243 (LRTDTVSTPVSGNELL) are excised as a propeptide. Positions 235-318 (TPVSGNELLE…DCPTDDFHRN (84 aa)) constitute a Disintegrin domain. Ca(2+) contacts are provided by Val-237, Asn-240, Leu-242, Glu-244, Glu-247, and Asp-250. 6 disulfides stabilise this stretch: Cys-249-Cys-264, Cys-251-Cys-259, Cys-258-Cys-281, Cys-272-Cys-278, Cys-277-Cys-303, and Cys-290-Cys-310. The D/ECD-tripeptide signature appears at 296–298 (ECD).

It belongs to the venom metalloproteinase (M12B) family. P-III subfamily. P-IIIb sub-subfamily. Monomer. Zn(2+) serves as cofactor. Post-translationally, the N-terminus of the metalloproteinase is blocked. In terms of tissue distribution, expressed by the venom gland.

The protein localises to the secreted. Its activity is regulated as follows. Inhibited by EDTA. Cleaves the alpha chain of fibrinogen (FGA) preferentially and cleaves the beta chain (FGB) either on longer incubation or at high concentrations. Induces apoptosis of endothelial cells (prior to cell detachment). Its function is as follows. Disintegrin: inhibits platelet aggregation induced by ADP, thrombin, platelet-activating factor and collagen. Acts by inhibiting fibrinogen interaction with platelet receptors GPIIb/GPIIIa (ITGA2B/ITGB3). This Craspedocephalus gramineus (Bamboo pit viper) protein is Zinc metalloproteinase/disintegrin.